Consider the following 338-residue polypeptide: Glycerol-1-phosphate dehydrogenase [NAD(P)+] (338 aa).

Residues 81–85 and 103–106 contribute to the NAD(+) site; these read GRPLD and TSAS. Residue D108 participates in substrate binding. S112 is an NAD(+) binding site. Residue D157 participates in substrate binding. Zn(2+) is bound by residues D157 and H238. H242 lines the substrate pocket. H256 is a binding site for Zn(2+).

The protein belongs to the glycerol-1-phosphate dehydrogenase family. In terms of assembly, homodimer. It depends on Zn(2+) as a cofactor.

Its subcellular location is the cytoplasm. It catalyses the reaction sn-glycerol 1-phosphate + NAD(+) = dihydroxyacetone phosphate + NADH + H(+). The enzyme catalyses sn-glycerol 1-phosphate + NADP(+) = dihydroxyacetone phosphate + NADPH + H(+). It participates in membrane lipid metabolism; glycerophospholipid metabolism. Its function is as follows. Catalyzes the NAD(P)H-dependent reduction of dihydroxyacetonephosphate (DHAP or glycerone phosphate) to glycerol 1-phosphate (G1P). The G1P thus generated is used as the glycerophosphate backbone of phospholipids in the cellular membranes of Archaea. The chain is Glycerol-1-phosphate dehydrogenase [NAD(P)+] from Pyrobaculum calidifontis (strain DSM 21063 / JCM 11548 / VA1).